Consider the following 236-residue polypeptide: Phosphoribosylaminoimidazole-succinocarboxamide synthase (236 aa).

Belongs to the SAICAR synthetase family.

The enzyme catalyses 5-amino-1-(5-phospho-D-ribosyl)imidazole-4-carboxylate + L-aspartate + ATP = (2S)-2-[5-amino-1-(5-phospho-beta-D-ribosyl)imidazole-4-carboxamido]succinate + ADP + phosphate + 2 H(+). Its pathway is purine metabolism; IMP biosynthesis via de novo pathway; 5-amino-1-(5-phospho-D-ribosyl)imidazole-4-carboxamide from 5-amino-1-(5-phospho-D-ribosyl)imidazole-4-carboxylate: step 1/2. The sequence is that of Phosphoribosylaminoimidazole-succinocarboxamide synthase from Campylobacter concisus (strain 13826).